Here is a 634-residue protein sequence, read N- to C-terminus: 1-deoxy-D-xylulose-5-phosphate synthase (634 aa).

Residues histidine 74 and 115-117 (AHS) contribute to the thiamine diphosphate site. Aspartate 146 is a Mg(2+) binding site. Residues 147–148 (GA), asparagine 176, tyrosine 283, and glutamate 365 each bind thiamine diphosphate. Asparagine 176 contacts Mg(2+).

The protein belongs to the transketolase family. DXPS subfamily. In terms of assembly, homodimer. Mg(2+) is required as a cofactor. It depends on thiamine diphosphate as a cofactor.

The catalysed reaction is D-glyceraldehyde 3-phosphate + pyruvate + H(+) = 1-deoxy-D-xylulose 5-phosphate + CO2. It participates in metabolic intermediate biosynthesis; 1-deoxy-D-xylulose 5-phosphate biosynthesis; 1-deoxy-D-xylulose 5-phosphate from D-glyceraldehyde 3-phosphate and pyruvate: step 1/1. In terms of biological role, catalyzes the acyloin condensation reaction between C atoms 2 and 3 of pyruvate and glyceraldehyde 3-phosphate to yield 1-deoxy-D-xylulose-5-phosphate (DXP). The chain is 1-deoxy-D-xylulose-5-phosphate synthase from Burkholderia mallei (strain ATCC 23344).